We begin with the raw amino-acid sequence, 62 residues long: Large ribosomal subunit protein eL24 (62 aa).

Zn(2+)-binding residues include cysteine 7, cysteine 10, cysteine 33, and cysteine 37. The C4-type zinc-finger motif lies at 7-37; sequence CSFCGREIEPGTGIMYVKNDGSILWFCSRKC.

This sequence belongs to the eukaryotic ribosomal protein eL24 family. In terms of assembly, part of the 50S ribosomal subunit. Forms a cluster with proteins L3 and L14. It depends on Zn(2+) as a cofactor.

Binds to the 23S rRNA. This Staphylothermus marinus (strain ATCC 43588 / DSM 3639 / JCM 9404 / F1) protein is Large ribosomal subunit protein eL24.